Reading from the N-terminus, the 542-residue chain is CTP synthase (542 aa).

Residues 1–265 (MTKFVFVTGG…DEIVCHKLNL (265 aa)) are amidoligase domain. S13 contacts CTP. Position 13 (S13) interacts with UTP. ATP is bound by residues 14–19 (SLGKGI) and D71. 2 residues coordinate Mg(2+): D71 and E139. CTP contacts are provided by residues 146–148 (DIE), 186–191 (KTKPTQ), and K222. Residues 186 to 191 (KTKPTQ) and K222 each bind UTP. One can recognise a Glutamine amidotransferase type-1 domain in the interval 290–542 (NVAFVGKYVD…IAAALANRKA (253 aa)). G351 is a binding site for L-glutamine. C378 (nucleophile; for glutamine hydrolysis) is an active-site residue. L-glutamine-binding positions include 379–382 (LGMQ), E402, and R468. Residues H515 and E517 contribute to the active site.

Belongs to the CTP synthase family. As to quaternary structure, homotetramer.

The catalysed reaction is UTP + L-glutamine + ATP + H2O = CTP + L-glutamate + ADP + phosphate + 2 H(+). It carries out the reaction L-glutamine + H2O = L-glutamate + NH4(+). The enzyme catalyses UTP + NH4(+) + ATP = CTP + ADP + phosphate + 2 H(+). It functions in the pathway pyrimidine metabolism; CTP biosynthesis via de novo pathway; CTP from UDP: step 2/2. Allosterically activated by GTP, when glutamine is the substrate; GTP has no effect on the reaction when ammonia is the substrate. The allosteric effector GTP functions by stabilizing the protein conformation that binds the tetrahedral intermediate(s) formed during glutamine hydrolysis. Inhibited by the product CTP, via allosteric rather than competitive inhibition. Functionally, catalyzes the ATP-dependent amination of UTP to CTP with either L-glutamine or ammonia as the source of nitrogen. Regulates intracellular CTP levels through interactions with the four ribonucleotide triphosphates. The polypeptide is CTP synthase (Methylobacillus flagellatus (strain ATCC 51484 / DSM 6875 / VKM B-1610 / KT)).